The chain runs to 429 residues: Fumarylacetoacetase (429 aa).

Aspartate 139 contacts Ca(2+). Catalysis depends on histidine 146, which acts as the Proton acceptor. Arginine 155 contributes to the substrate binding site. Residues glutamate 212, glutamate 214, and aspartate 246 each coordinate Ca(2+). Aspartate 246 is a Mg(2+) binding site. Glutamine 253 provides a ligand contact to substrate. The Mg(2+) site is built by lysine 266 and threonine 270. Threonine 363 is a substrate binding site.

Belongs to the FAH family. Ca(2+) is required as a cofactor. It depends on Mg(2+) as a cofactor.

The catalysed reaction is 4-fumarylacetoacetate + H2O = acetoacetate + fumarate + H(+). Its pathway is amino-acid degradation; L-phenylalanine degradation; acetoacetate and fumarate from L-phenylalanine: step 6/6. Functionally, converts fumarylacetoacetate to acetoacetate and fumarate. Involved in tyrosine catabolic pathway. Catalyzes the final step in the tyrosine degradation pathway. The polypeptide is Fumarylacetoacetase (Oryza sativa subsp. japonica (Rice)).